The following is a 139-amino-acid chain: Small ribosomal subunit protein uS12m (139 aa).

The transit peptide at 1 to 29 (MSWSGPLRGLNTSLTCGPALVPRLWATCS) directs the protein to the mitochondrion. The segment at 36–56 (MHRLGGPPKRPPQKLGPTEGR) is disordered.

This sequence belongs to the universal ribosomal protein uS12 family. In terms of assembly, component of the mitochondrial ribosome small subunit (28S) which comprises a 12S rRNA and about 30 distinct proteins.

The protein resides in the mitochondrion. This chain is Small ribosomal subunit protein uS12m (MRPS12), found in Pongo abelii (Sumatran orangutan).